The following is a 473-amino-acid chain: MTKNIGKITQIISAVVDVKFTNNGELPKILNALECYNDKQRIVLEVAQHIGDDTVRCIAMDSMEGLVRGVEVIDTGSPIRIPVGTETLGRIMNVVGEPIDGKGDIKSSNISSIYKPAPDFTHQSTECNILVTGIKVIDLLAPYTKGGKIGLFGGAGVGKTVLIMELINNVAKAHGGYTVFAGVGERTREGNDLYHEMIDSGVINLAEPEKSKVALVYGQMNEPPGARARVALSGLTIAESFRDMNEGQDVLFFVDNIFRFTQAGSEVSALLGRIPSAVGYQPTLATDMGELQERITSTKYGSITSVQAIYVPADDLTDPAPATSFAHLDATTVLSRQIAEFGIYPAVDPLDSNSQVLDPMIVGEEHYSVARQVQQVLQTYKSLQDIITILGMDELSEEDKLTVARARKIQRFLSQPFHVAEVFTGAAGKFVNLADTIAGFKGLVEGKYDDLPEAAFYMVGTIDEAIEKAQTLK.

Residue 153 to 160 (GGAGVGKT) participates in ATP binding.

Belongs to the ATPase alpha/beta chains family. In terms of assembly, F-type ATPases have 2 components, CF(1) - the catalytic core - and CF(0) - the membrane proton channel. CF(1) has five subunits: alpha(3), beta(3), gamma(1), delta(1), epsilon(1). CF(0) has three main subunits: a(1), b(2) and c(9-12). The alpha and beta chains form an alternating ring which encloses part of the gamma chain. CF(1) is attached to CF(0) by a central stalk formed by the gamma and epsilon chains, while a peripheral stalk is formed by the delta and b chains.

It localises to the cell inner membrane. It carries out the reaction ATP + H2O + 4 H(+)(in) = ADP + phosphate + 5 H(+)(out). Its function is as follows. Produces ATP from ADP in the presence of a proton gradient across the membrane. The catalytic sites are hosted primarily by the beta subunits. The polypeptide is ATP synthase subunit beta (Rickettsia conorii (strain ATCC VR-613 / Malish 7)).